The primary structure comprises 623 residues: MAAAGAGPGPGVSAGPGPGAAASATTAEDRETEPVAAGAGEGPSAAPGAEPSSGEAESGDANLVDVSGLETESSNGKDTLEGTGDTSEVMDTQAGSVDEENGRQLGEVELQCGICTKWFTADTFGIDTSSCLPFMTNYSFHCNVCHHSGNTYFLRKQANLKEMCLSALANLTWQSRTQDEHPKTMFSKDKDIIPFIDKYWECMTTRQRPGKMTWPNNIVKTMSKERDVFLVKEHPDPGSKDPEEDYPKFGLLDQDLSNIGPAYDNQKQSSAVSASGNLNGGIAAGSSGKGRGAKRKQQDGGTTGTTKKARSDPLFSAQRLPPHGYPLEHPFNKDGYRYILAEPDPHAPDPEKLELDCWAGKPIPGDLYRACLYERVLLALHDRAPQLKISDDRLTVVGEKGYSMVRASHGVRKGAWYFEITVDEMPPDTAARLGWSQPLGNLQAPLGYDKFSYSWRSKKGTKFHQSIGKHYSSGYGQGDVLGFYINLPEDTETAKSLPDTYKDKALIKFKSYLYFEEKDFVDKAEKSLKQTPHSEIIFYKNGVNQGVAYRDIFEGVYFPAISLYKSCTVSINFGPSFKYPPKDLTYHPMSDMGWGAVVEHTLADVLYHVETEVDGRRSPPWEP.

Positions 1–18 are enriched in gly residues; it reads MAAAGAGPGPGVSAGPGP. A PHD-type; atypical zinc finger spans residues 1 to 62; the sequence is MAAAGAGPGP…SGEAESGDAN (62 aa). Residues 1–99 form a disordered region; it reads MAAAGAGPGP…MDTQAGSVDE (99 aa). Positions 36-56 are enriched in low complexity; that stretch reads AAGAGEGPSAAPGAEPSSGEA. The tract at residues 63-172 is DNA-binding; that stretch reads LVDVSGLETE…MCLSALANLT (110 aa). A compositionally biased stretch (polar residues) spans 84–95; it reads GDTSEVMDTQAG. The residue at position 96 (S96) is a Phosphoserine. A C4-type zinc finger spans residues 112-145; it reads CGICTKWFTADTFGIDTSSCLPFMTNYSFHCNVC. The span at 230–247 shows a compositional bias: basic and acidic residues; sequence LVKEHPDPGSKDPEEDYP. The disordered stretch occupies residues 230–326; the sequence is LVKEHPDPGS…AQRLPPHGYP (97 aa). Residues 265–277 are compositionally biased toward polar residues; it reads NQKQSSAVSASGN. The segment covering 278-290 has biased composition (gly residues); sequence LNGGIAAGSSGKG. R291 carries the asymmetric dimethylarginine; by PRMT1 and PRMT5 modification. S311 bears the Phosphoserine mark. The interaction with RBBP5 stretch occupies residues 311–623; it reads SDPLFSAQRL…DGRRSPPWEP (313 aa). The B30.2/SPRY domain maps to 355–578; the sequence is LDCWAGKPIP…VSINFGPSFK (224 aa).

As to quaternary structure, interacts with HCFC1. Core component of several methyltransferase-containing complexes including MLL1/MLL, MLL2/3 (also named ASCOM complex) and MLL4/WBP7. Each complex is at least composed of ASH2L, RBBP5, WDR5, DPY30, one or more specific histone methyltransferases (KMT2A/MLL1, KMT2D/MLL2, KMT2C/MLL3 and KMT2B/MLL4), and the facultative components PAGR1, BACC1, CHD8, E2F6, HCFC1, HCFC2, HSP70, INO80C, KDM6A, KANSL1, LAS1L, MAX, MCRS1, MEN1, MGA, KAT8/MOF, NCOA6, PAXIP1/PTIP, PELP1, PHF20, PRP31, RING2, RUVB1/TIP49A, RUVB2/TIP49B, SENP3, TAF1, TAF4, TAF6, TAF7, TAF9, TEX10 and alpha- and beta-tubulin. Component of the SET1 complex, at least composed of the catalytic subunit (SETD1A or SETD1B), WDR5, WDR82, RBBP5, ASH2L/ASH2, CXXC1/CFP1, HCFC1 and DPY30. Found in a complex with RBBP5, ASH2L, DPY30, KMT2A, KMT2D and WDR5. Component of a histone methylation complex composed of at least ZNF335, RBBP5, ASH2L and WDR5; the complex may have histone H3-specific methyltransferase activity, however does not have specificity for 'Lys-4' of histone H3. Within the complex, interacts with ZNF335. Interacts with RBBP5. Components of this complex may associate with components of a nuclear receptor-mediated transcription complex to form a complex at least composed of ZNF335, HCFC1, CCAR2, EMSY, MKI67, RBBP5, ASH2L and WDR5. Within this complex also interacts with CCAR2 and EMSY. Interacts with DPY30. Interacts with SETD1A and SETD1B. Both monomethylated and dimethylated on arginine residues in the C-terminus. Arg-291 is the major site. Methylation is not required for nuclear localization, nor for MLL complex integrity or maintenance of global histone H3K4me3 levels. Ubiquitously expressed, with abundant expression in the heart, skeletal muscle and kidney. Low expression is seen in spleen, lung and testis.

The protein localises to the nucleus. Functionally, transcriptional regulator. Component or associated component of some histone methyltransferase complexes which regulates transcription through recruitment of those complexes to gene promoters. Component of the Set1/Ash2 histone methyltransferase (HMT) complex, a complex that specifically methylates 'Lys-4' of histone H3, but not if the neighboring 'Lys-9' residue is already methylated. As part of the MLL1/MLL complex it is involved in methylation and dimethylation at 'Lys-4' of histone H3. May play a role in hematopoiesis. In association with RBBP5 and WDR5, stimulates the histone methyltransferase activities of KMT2A, KMT2B, KMT2C, KMT2D, SETD1A and SETD1B. The chain is Set1/Ash2 histone methyltransferase complex subunit ASH2 (Ash2l) from Mus musculus (Mouse).